Here is a 440-residue protein sequence, read N- to C-terminus: Acyltransferase Pun1 (440 aa).

Catalysis depends on proton acceptor residues H169 and D384.

The protein belongs to the plant acyltransferase family.

The catalysed reaction is vanillylamine + (6E)-8-methylnon-6-enoyl-CoA = capsaicin + CoA + H(+). It carries out the reaction (6E)-8-methylnon-6-enoyl-CoA + 4-hydroxy-3-methoxy-benzenemethanol = capsiate + CoA. Its function is as follows. Involved in the biosynthesis of capsaicinoids and capsinoids natural products, pungent alkaloids synthesized from phenylpropanoid intermediates in the placental tissue of chili pepper fruit acting as repellant on herbivorous mammals and conferring spiciness to hot peppers. Catalyzes the biosynthesis of capsaicin, a pungent component, and of capsiate, a non-pungent component, from vanillylamine and vanillyl alcohol, respectively. Can transfer an acyl from 8-methylnon-6-enoyl-CoA to vanillylamine forming capsaicin and CoA. This chain is Acyltransferase Pun1, found in Capsicum frutescens (Cayenne pepper).